A 292-amino-acid polypeptide reads, in one-letter code: Carbapenem-hydrolyzing beta-lactamase transcriptional activator (292 aa).

Residues 5-62 form the HTH lysR-type domain; it reads IPLNALRAFEASARYLNFTKAGLELHVSQAAVSQHVRTLEAILGVNLFKRLPRGLQLT. A DNA-binding region (H-T-H motif) is located at residues 22–41; sequence FTKAGLELHVSQAAVSQHVR.

It belongs to the LysR transcriptional regulatory family.

In terms of biological role, this protein is a positive regulator of gene expression of carbapenem-hydrolyzing beta-lactamase (smeA). Seems to also be a repressor of its own transcription. This Serratia marcescens protein is Carbapenem-hydrolyzing beta-lactamase transcriptional activator (smeR).